The chain runs to 315 residues: ADP-L-glycero-D-manno-heptose-6-epimerase (315 aa).

Residues 10–11 (FI), 31–32 (DD), Lys38, Lys53, 76–80 (QGACS), and Asn93 each bind NADP(+). Tyr140 functions as the Proton acceptor in the catalytic mechanism. Residue Lys144 participates in NADP(+) binding. Asn169 contributes to the substrate binding site. Residues Val170 and Lys178 each coordinate NADP(+). Lys178 acts as the Proton acceptor in catalysis. Substrate contacts are provided by residues Ser180, His187, 201–204 (FEGC), Arg214, and Tyr278.

Belongs to the NAD(P)-dependent epimerase/dehydratase family. HldD subfamily. As to quaternary structure, homopentamer. Requires NADP(+) as cofactor.

It carries out the reaction ADP-D-glycero-beta-D-manno-heptose = ADP-L-glycero-beta-D-manno-heptose. Its pathway is nucleotide-sugar biosynthesis; ADP-L-glycero-beta-D-manno-heptose biosynthesis; ADP-L-glycero-beta-D-manno-heptose from D-glycero-beta-D-manno-heptose 7-phosphate: step 4/4. Functionally, catalyzes the interconversion between ADP-D-glycero-beta-D-manno-heptose and ADP-L-glycero-beta-D-manno-heptose via an epimerization at carbon 6 of the heptose. In Syntrophotalea carbinolica (strain DSM 2380 / NBRC 103641 / GraBd1) (Pelobacter carbinolicus), this protein is ADP-L-glycero-D-manno-heptose-6-epimerase.